The sequence spans 323 residues: L-lactate dehydrogenase (323 aa).

NAD(+)-binding positions include V18, D39, R44, Y69, and 83–84 (GA). Substrate contacts are provided by Q86 and R92. NAD(+)-binding positions include T105, 122 to 124 (AAN), and S147. Residue 124-127 (NPVD) coordinates substrate. 152 to 155 (DTAR) provides a ligand contact to substrate. H179 functions as the Proton acceptor in the catalytic mechanism. Y223 bears the Phosphotyrosine mark. T232 serves as a coordination point for substrate.

Belongs to the LDH/MDH superfamily. LDH family. Homotetramer.

It is found in the cytoplasm. The catalysed reaction is (S)-lactate + NAD(+) = pyruvate + NADH + H(+). Its pathway is fermentation; pyruvate fermentation to lactate; (S)-lactate from pyruvate: step 1/1. In terms of biological role, catalyzes the conversion of lactate to pyruvate. This is L-lactate dehydrogenase from Pediococcus acidilactici.